We begin with the raw amino-acid sequence, 189 residues long: Lipid A acyltransferase PagP (189 aa).

Residues 1 to 23 form the signal peptide; the sequence is MKLKSVLYLLMLLNCLGLKSAHA. Residues His61, Asp104, and Ser105 contribute to the active site.

It belongs to the lipid A palmitoyltransferase family. In terms of assembly, homodimer.

The protein resides in the cell outer membrane. The catalysed reaction is a lipid A + a 1,2-diacyl-sn-glycero-3-phosphocholine = a hepta-acyl lipid A + a 2-acyl-sn-glycero-3-phosphocholine. It carries out the reaction a lipid IVA + a 1,2-diacyl-sn-glycero-3-phosphocholine = a lipid IVB + a 2-acyl-sn-glycero-3-phosphocholine. The enzyme catalyses a lipid IIA + a 1,2-diacyl-sn-glycero-3-phosphocholine = a lipid IIB + a 2-acyl-sn-glycero-3-phosphocholine. Functionally, transfers a fatty acid residue from the sn-1 position of a phospholipid to the N-linked hydroxyfatty acid chain on the proximal unit of lipid A or its precursors. In Erwinia amylovora (strain ATCC 49946 / CCPPB 0273 / Ea273 / 27-3), this protein is Lipid A acyltransferase PagP.